The chain runs to 103 residues: MANQKIRIRLKAYDYALIDRSAQEIVETAKRTGAVVKGPIPLPTKIERFNILRSPHVNKTSREQLEIRTHLRLMDIVDWTDKTTDALMKLDLPAGVDVEIKVQ.

It belongs to the universal ribosomal protein uS10 family. In terms of assembly, part of the 30S ribosomal subunit.

Its function is as follows. Involved in the binding of tRNA to the ribosomes. This Neisseria gonorrhoeae (strain ATCC 700825 / FA 1090) protein is Small ribosomal subunit protein uS10.